The chain runs to 463 residues: MYGNYSHFMKFPTGFGGSPGHSGSTSMSPSAALSTGKPMDSHPSYTDTPVSAPRTLSAVGTPLNALGSPYRVITSTMGPPSGTLAAPPGINLVAPPSSQLNVVNSVSISEDIKPLPGLPGIGNMNYPSTSPGSLVKHICAICGDRSSGKHYGVYSCEGCKGFFKRTIRKDLIYTCRDNKDCLIDKRQRNRCQYCRYQKCLVMGMKREAVQEERQRSRERAESEAECASSGHEDMPVERILEAELAVEPKTESYGDMNMENSTNDPVTNICHAADKQLFTLVEWAKRIPHFSDLTLEDQVILLRAGWNELLIASFSHRSVSVQDGILLATGLHVHRSSAHSAGVGSIFDRVLTELVSKMKDMQMDKSELGCLRAIVLFNPDAKGLSNPSEVETLREKVYATLEAYTKQKYPEQPGRFAKLLLRLPALRSIGLKCLEHLFFFKLIGDTPIDTFLMEMLETPLQIT.

Residues M1–I138 form a modulating region. The disordered stretch occupies residues G17–P53. Residues H21–L33 are compositionally biased toward polar residues. NR C4-type zinc fingers lie at residues C139–C159 and C175–C199. Residues C139–M204 constitute a DNA-binding region (nuclear receptor). The segment at K205–G230 is hinge. A compositionally biased stretch (basic and acidic residues) spans E211 to S222. The tract at residues E211–E232 is disordered. An NR LBD domain is found at H231–P459.

The protein belongs to the nuclear hormone receptor family. NR2 subfamily. As to quaternary structure, homodimer. Heterodimer with a RAR molecule. Binds DNA preferentially as a RAR/RXR heterodimer. Interacts with RARA. In terms of processing, acetylated by EP300.

It localises to the nucleus. The protein localises to the cytoplasm. Functionally, receptor for retinoic acid. Retinoic acid receptors bind as heterodimers to their target response elements in response to their ligands, all-trans or 9-cis retinoic acid, and regulate gene expression in various biological processes. The RAR/RXR heterodimers bind to the retinoic acid response elements (RARE) composed of tandem 5'-AGGTCA-3' sites known as DR1-DR5. The high affinity ligand for RXRs is 9-cis retinoic acid. This is Retinoic acid receptor RXR-gamma (RXRG) from Sus scrofa (Pig).